We begin with the raw amino-acid sequence, 487 residues long: L-carnitine dehydrogenase/betainyl-CoA thioesterase (487 aa).

The L-carnitine dehydrogenase stretch occupies residues 1-327; it reads MTTAAIIGGG…DAALKPKALP (327 aa). An NAD(+)-binding site is contributed by 8–13; the sequence is GGGVIG. The interval 328–487 is betainyl-CoA thioesterase; the sequence is DLDTADLTQP…GAGSAIRKPA (160 aa).

This sequence in the N-terminal section; belongs to the 3-hydroxyacyl-CoA dehydrogenase family. L-carnitine dehydrogenase subfamily. The protein in the C-terminal section; belongs to the betainyl-CoA thioesterase family. Homodimer.

It localises to the cytoplasm. It catalyses the reaction carnitine + NAD(+) = 3-dehydrocarnitine + NADH + H(+). It carries out the reaction N,N,N-trimethylglycyl-CoA + H2O = glycine betaine + CoA + H(+). The protein operates within amine and polyamine metabolism; carnitine metabolism. Multifunctional enzyme that catalyzes the NAD(+)-dependent oxidation of L-carnitine to 3-dehydrocarnitine and the cleavage of betainyl-CoA (N,N,N-trimethylglycyl-CoA) into glycine betaine and coenzyme A. This chain is L-carnitine dehydrogenase/betainyl-CoA thioesterase, found in Ruegeria pomeroyi (strain ATCC 700808 / DSM 15171 / DSS-3) (Silicibacter pomeroyi).